The following is a 1050-amino-acid chain: RecBCD enzyme subunit RecB (1050 aa).

A UvrD-like helicase ATP-binding domain is found at 1–443 (MKPFNIFDSN…LQLVNNYRST (443 aa)). Positions 1-766 (MKPFNIFDSN…TNYVKLEGTQ (766 aa)) are DNA-binding and helicase activity, interacts with RecC. An ATP-binding site is contributed by 21-28 (ASAGTGKT). Positions 458–701 (SPFLEIPGYL…KITTIHSSKG (244 aa)) constitute a UvrD-like helicase C-terminal domain. The segment at 814–1050 (PKTIFSFSST…KAIQKCQAYH (237 aa)) is nuclease activity, interacts with RecD and RecA. Residues His-859, Asp-945, and Asp-958 each contribute to the Mg(2+) site. The For nuclease activity role is filled by Asp-958.

It belongs to the helicase family. UvrD subfamily. In terms of assembly, heterotrimer of RecB, RecC and RecD. All subunits contribute to DNA-binding. Interacts with RecA. Mg(2+) serves as cofactor.

It carries out the reaction Exonucleolytic cleavage (in the presence of ATP) in either 5'- to 3'- or 3'- to 5'-direction to yield 5'-phosphooligonucleotides.. The enzyme catalyses Couples ATP hydrolysis with the unwinding of duplex DNA by translocating in the 3'-5' direction.. The catalysed reaction is ATP + H2O = ADP + phosphate + H(+). Its function is as follows. A helicase/nuclease that prepares dsDNA breaks (DSB) for recombinational DNA repair. Binds to DSBs and unwinds DNA via a highly rapid and processive ATP-dependent bidirectional helicase activity. Unwinds dsDNA until it encounters a Chi (crossover hotspot instigator) sequence from the 3' direction. Cuts ssDNA a few nucleotides 3' to the Chi site. The properties and activities of the enzyme are changed at Chi. The Chi-altered holoenzyme produces a long 3'-ssDNA overhang and facilitates RecA-binding to the ssDNA for homologous DNA recombination and repair. Holoenzyme degrades any linearized DNA that is unable to undergo homologous recombination. In the holoenzyme this subunit contributes ATPase, 3'-5' helicase, exonuclease activity and loads RecA onto ssDNA. The sequence is that of RecBCD enzyme subunit RecB from Chlamydia pneumoniae (Chlamydophila pneumoniae).